The primary structure comprises 489 residues: MERKFNDQELIRREKLKNLQEANQDPYEIEKVSRTMTIGDFNSKFAKLKTHNTNNNIKLAGRVVALRQTFGVIRDFYGDTQFYLNKKKVSKSMLEYFNKVLDLGDIVEIFGSPFRTQKGELTLDVKKIKIVSKALKPLPEKWHGLEDEELRARHRYVDLIVNKDSMKVFVDRIRILKIIRQFMDSQNYLEVETPVLHPILGGANARPFITFHNTLERNFYLRIATELPLKKLIVGGFDKVYEIGRIFRNEGMDSTHNPEFTSMEVYAAYENMEYMMRLTENLFKYVAKSLKKPVVKMGENEIYLTQKFRRIHMVDFIKQETGVDFWEVKSNQEAQELAKKHNVKFEKHQSTLGHIINLFFEEFCEAKCIQPTFVYGHPIDVSPLSKKDYKNPGFTKRFELFINTKEYANAFAELNDPIDQYERFEAQVKEKSLGNDEAVEMDMDFIEALEYGLPPTAGLGVGIDRMIMLFTEKSSIRDVLLFPHMKDKK.

Mg(2+) is bound by residues glutamate 399 and glutamate 406.

Belongs to the class-II aminoacyl-tRNA synthetase family. As to quaternary structure, homodimer. Requires Mg(2+) as cofactor.

The protein localises to the cytoplasm. It catalyses the reaction tRNA(Lys) + L-lysine + ATP = L-lysyl-tRNA(Lys) + AMP + diphosphate. In Malacoplasma penetrans (strain HF-2) (Mycoplasma penetrans), this protein is Lysine--tRNA ligase.